Consider the following 322-residue polypeptide: Putative T-box protein 11 (322 aa).

Residues 16-185 (LWRSCHEYDN…NNPYSTGSRK (170 aa)) constitute a DNA-binding region (T-box). Residues 171–182 (TLKTNNNPYSTG) are compositionally biased toward polar residues. The disordered stretch occupies residues 171–214 (TLKTNNNPYSTGSRKDRRRERQSPVYSEGTSSEKSISPPPAKKI).

It is found in the nucleus. This Caenorhabditis elegans protein is Putative T-box protein 11 (tbx-11).